The chain runs to 478 residues: Glycogen synthase (478 aa).

Position 15 (Lys15) interacts with ADP-alpha-D-glucose.

This sequence belongs to the glycosyltransferase 1 family. Bacterial/plant glycogen synthase subfamily.

The catalysed reaction is [(1-&gt;4)-alpha-D-glucosyl](n) + ADP-alpha-D-glucose = [(1-&gt;4)-alpha-D-glucosyl](n+1) + ADP + H(+). Its pathway is glycan biosynthesis; glycogen biosynthesis. In terms of biological role, synthesizes alpha-1,4-glucan chains using ADP-glucose. The polypeptide is Glycogen synthase (Clostridium botulinum (strain Eklund 17B / Type B)).